Reading from the N-terminus, the 221-residue chain is 7-cyano-7-deazaguanine synthase (221 aa).

Residue 9–19 (YSGGMDSFTLL) coordinates ATP. Positions 185, 193, 196, and 199 each coordinate Zn(2+).

Belongs to the QueC family. Zn(2+) is required as a cofactor.

The catalysed reaction is 7-carboxy-7-deazaguanine + NH4(+) + ATP = 7-cyano-7-deazaguanine + ADP + phosphate + H2O + H(+). It functions in the pathway purine metabolism; 7-cyano-7-deazaguanine biosynthesis. In terms of biological role, catalyzes the ATP-dependent conversion of 7-carboxy-7-deazaguanine (CDG) to 7-cyano-7-deazaguanine (preQ(0)). The polypeptide is 7-cyano-7-deazaguanine synthase (Marinobacter nauticus (strain ATCC 700491 / DSM 11845 / VT8) (Marinobacter aquaeolei)).